The chain runs to 197 residues: Xanthine phosphoribosyltransferase (197 aa).

Xanthine-binding residues include Leu-20 and Asn-27. 128–132 (ANGQA) contacts 5-phospho-alpha-D-ribose 1-diphosphate. Lys-156 contributes to the xanthine binding site.

Belongs to the purine/pyrimidine phosphoribosyltransferase family. Xpt subfamily. In terms of assembly, homodimer.

It localises to the cytoplasm. The catalysed reaction is XMP + diphosphate = xanthine + 5-phospho-alpha-D-ribose 1-diphosphate. It participates in purine metabolism; XMP biosynthesis via salvage pathway; XMP from xanthine: step 1/1. In terms of biological role, converts the preformed base xanthine, a product of nucleic acid breakdown, to xanthosine 5'-monophosphate (XMP), so it can be reused for RNA or DNA synthesis. The protein is Xanthine phosphoribosyltransferase of Bacillus cereus (strain B4264).